The primary structure comprises 178 residues: Ribosome maturation factor RimP (178 aa).

The protein belongs to the RimP family.

It is found in the cytoplasm. Its function is as follows. Required for maturation of 30S ribosomal subunits. This Streptococcus pyogenes serotype M5 (strain Manfredo) protein is Ribosome maturation factor RimP.